The following is a 292-amino-acid chain: 4-hydroxy-tetrahydrodipicolinate synthase (292 aa).

Residue Thr50 coordinates pyruvate. Catalysis depends on Tyr139, which acts as the Proton donor/acceptor. Lys167 (schiff-base intermediate with substrate) is an active-site residue. Ile208 provides a ligand contact to pyruvate.

This sequence belongs to the DapA family. As to quaternary structure, homotetramer; dimer of dimers.

The protein localises to the cytoplasm. It catalyses the reaction L-aspartate 4-semialdehyde + pyruvate = (2S,4S)-4-hydroxy-2,3,4,5-tetrahydrodipicolinate + H2O + H(+). The protein operates within amino-acid biosynthesis; L-lysine biosynthesis via DAP pathway; (S)-tetrahydrodipicolinate from L-aspartate: step 3/4. Catalyzes the condensation of (S)-aspartate-beta-semialdehyde [(S)-ASA] and pyruvate to 4-hydroxy-tetrahydrodipicolinate (HTPA). This chain is 4-hydroxy-tetrahydrodipicolinate synthase, found in Oenococcus oeni (strain ATCC BAA-331 / PSU-1).